Consider the following 401-residue polypeptide: L-rhamnonate dehydratase (401 aa).

Residues His-29 and Arg-55 each coordinate substrate. The Mg(2+) site is built by Asp-222, Glu-248, and Glu-276. Catalysis depends on His-325, which acts as the Proton acceptor. Residue Glu-345 participates in substrate binding.

This sequence belongs to the mandelate racemase/muconate lactonizing enzyme family. RhamD subfamily. As to quaternary structure, homooctamer; tetramer of dimers. Mg(2+) serves as cofactor.

The enzyme catalyses L-rhamnonate = 2-dehydro-3-deoxy-L-rhamnonate + H2O. Catalyzes the dehydration of L-rhamnonate to 2-keto-3-deoxy-L-rhamnonate (KDR). This chain is L-rhamnonate dehydratase, found in Klebsiella pneumoniae subsp. pneumoniae (strain ATCC 700721 / MGH 78578).